The chain runs to 117 residues: Large ribosomal subunit protein bL20 (117 aa).

It belongs to the bacterial ribosomal protein bL20 family.

Binds directly to 23S ribosomal RNA and is necessary for the in vitro assembly process of the 50S ribosomal subunit. It is not involved in the protein synthesizing functions of that subunit. This is Large ribosomal subunit protein bL20 from Campylobacter jejuni subsp. jejuni serotype O:6 (strain 81116 / NCTC 11828).